Here is a 64-residue protein sequence, read N- to C-terminus: Large ribosomal subunit protein uL29 (64 aa).

It belongs to the universal ribosomal protein uL29 family.

The chain is Large ribosomal subunit protein uL29 from Psychrobacter sp. (strain PRwf-1).